Here is a 258-residue protein sequence, read N- to C-terminus: Snake venom serine protease (258 aa).

The signal sequence occupies residues 1 to 18 (MVLIRVLANLLILQLSYA). Residues 19–24 (QKSSEL) constitute a propeptide that is removed on maturation. The region spanning 25–249 (VIGGDECNIN…YTEWIQSILA (225 aa)) is the Peptidase S1 domain. 6 disulfide bridges follow: cysteine 31–cysteine 163, cysteine 50–cysteine 66, cysteine 98–cysteine 256, cysteine 142–cysteine 210, cysteine 174–cysteine 189, and cysteine 200–cysteine 225. Residues histidine 65 and aspartate 110 each act as charge relay system in the active site. N-linked (GlcNAc...) asparagine glycosylation occurs at asparagine 154. Serine 204 acts as the Charge relay system in catalysis.

The protein belongs to the peptidase S1 family. Snake venom subfamily. Monomer. In terms of tissue distribution, expressed by the venom gland.

The protein resides in the secreted. In terms of biological role, snake venom serine protease that may act in the hemostasis system of the prey. This Lachesis stenophrys (Central American bushmaster) protein is Snake venom serine protease.